The primary structure comprises 257 residues: UPF0246 protein AHA_3667 (257 aa).

The protein belongs to the UPF0246 family.

This is UPF0246 protein AHA_3667 from Aeromonas hydrophila subsp. hydrophila (strain ATCC 7966 / DSM 30187 / BCRC 13018 / CCUG 14551 / JCM 1027 / KCTC 2358 / NCIMB 9240 / NCTC 8049).